Here is a 763-residue protein sequence, read N- to C-terminus: Serine/threonine-protein kinase PknG (763 aa).

Positions 1–32 (MKREHMDHDTEDVGQAAQRADPPSGTTEGRLQ) are disordered. Positions 160–406 (YEVKGCIAHG…SAEEMSAQLM (247 aa)) constitute a Protein kinase domain. Residues 166 to 174 (IAHGGLGWV) and Lys-190 each bind ATP. Catalysis depends on Asp-289, which acts as the Proton acceptor.

It belongs to the protein kinase superfamily. Ser/Thr protein kinase family. Post-translationally, autophosphorylated.

It carries out the reaction L-seryl-[protein] + ATP = O-phospho-L-seryl-[protein] + ADP + H(+). It catalyses the reaction L-threonyl-[protein] + ATP = O-phospho-L-threonyl-[protein] + ADP + H(+). The protein is Serine/threonine-protein kinase PknG (pknG) of Mycobacterium leprae (strain TN).